A 442-amino-acid polypeptide reads, in one-letter code: D-serine dehydratase (442 aa).

The residue at position 118 (Lys118) is an N6-(pyridoxal phosphate)lysine.

Belongs to the serine/threonine dehydratase family. DsdA subfamily. In terms of assembly, monomer. Pyridoxal 5'-phosphate serves as cofactor.

The enzyme catalyses D-serine = pyruvate + NH4(+). The chain is D-serine dehydratase from Shigella dysenteriae serotype 1 (strain Sd197).